Here is a 365-residue protein sequence, read N- to C-terminus: tRNA dimethylallyltransferase (365 aa).

Residue Ala-23 to Thr-30 coordinates ATP. Thr-25 to Thr-30 contributes to the substrate binding site. Interaction with substrate tRNA stretches follow at residues Asp-48–Leu-51, Gln-172–Arg-176, and Arg-256–Arg-261.

This sequence belongs to the IPP transferase family. Monomer. Mg(2+) is required as a cofactor.

The enzyme catalyses adenosine(37) in tRNA + dimethylallyl diphosphate = N(6)-dimethylallyladenosine(37) in tRNA + diphosphate. Its function is as follows. Catalyzes the transfer of a dimethylallyl group onto the adenine at position 37 in tRNAs that read codons beginning with uridine, leading to the formation of N6-(dimethylallyl)adenosine (i(6)A). The sequence is that of tRNA dimethylallyltransferase from Psychrobacter sp. (strain PRwf-1).